The sequence spans 498 residues: ATP synthase subunit beta, chloroplastic (498 aa).

172–179 (GGAGVGKT) lines the ATP pocket.

This sequence belongs to the ATPase alpha/beta chains family. F-type ATPases have 2 components, CF(1) - the catalytic core - and CF(0) - the membrane proton channel. CF(1) has five subunits: alpha(3), beta(3), gamma(1), delta(1), epsilon(1). CF(0) has four main subunits: a(1), b(1), b'(1) and c(9-12).

Its subcellular location is the plastid. The protein resides in the chloroplast thylakoid membrane. The catalysed reaction is ATP + H2O + 4 H(+)(in) = ADP + phosphate + 5 H(+)(out). In terms of biological role, produces ATP from ADP in the presence of a proton gradient across the membrane. The catalytic sites are hosted primarily by the beta subunits. This is ATP synthase subunit beta, chloroplastic from Saccharum hybrid (Sugarcane).